The primary structure comprises 212 residues: Pyridoxine/pyridoxamine 5'-phosphate oxidase (212 aa).

Residues 59–64, 74–75, Lys81, and Gln103 contribute to the FMN site; these read RMVLMK and YS. Lys64 serves as a coordination point for substrate. Residues Tyr121 and Arg125 each contribute to the substrate site. Residues 138-139 and Trp183 each bind FMN; that span reads QS. 189–191 contacts substrate; it reads RLH. Arg193 contributes to the FMN binding site.

Belongs to the pyridoxamine 5'-phosphate oxidase family. Homodimer. Requires FMN as cofactor.

It carries out the reaction pyridoxamine 5'-phosphate + O2 + H2O = pyridoxal 5'-phosphate + H2O2 + NH4(+). It catalyses the reaction pyridoxine 5'-phosphate + O2 = pyridoxal 5'-phosphate + H2O2. It participates in cofactor metabolism; pyridoxal 5'-phosphate salvage; pyridoxal 5'-phosphate from pyridoxamine 5'-phosphate: step 1/1. Its pathway is cofactor metabolism; pyridoxal 5'-phosphate salvage; pyridoxal 5'-phosphate from pyridoxine 5'-phosphate: step 1/1. Catalyzes the oxidation of either pyridoxine 5'-phosphate (PNP) or pyridoxamine 5'-phosphate (PMP) into pyridoxal 5'-phosphate (PLP). In Rhodopseudomonas palustris (strain BisB5), this protein is Pyridoxine/pyridoxamine 5'-phosphate oxidase.